The following is a 614-amino-acid chain: Maltose permease MAL61 (614 aa).

The tract at residues 1-48 is disordered; sequence MKGLSSLINRKKDRNDSHLDEIENGVNATEFNSIEMEEQGKKSDFDLS. Topologically, residues 1–108 are cytoplasmic; that stretch reads MKGLSSLINR…AAAWSLLVST (108 aa). The span at 38 to 48 shows a compositional bias: basic and acidic residues; that stretch reads EQGKKSDFDLS. A helical membrane pass occupies residues 109 to 129; it reads TLIQEGYDTAILGAFYALPVF. The Extracellular segment spans residues 130–144; the sequence is QKKYGSLNSNTGDYE. The helical transmembrane segment at 145–165 threads the bilayer; the sequence is ISVSWQIGLCLCYMAGEIVGL. Residues 166–180 are Cytoplasmic-facing; sequence QVTGPSVDYMGNRYT. A helical membrane pass occupies residues 181 to 201; it reads LIMALFFLAAFIFILYFCKSL. Residue glycine 202 is a topological domain, extracellular. Residues 203–223 traverse the membrane as a helical segment; the sequence is MIAVGQALCGMPWGCFQCLTV. The Cytoplasmic portion of the chain corresponds to 224-236; that stretch reads SYASEICPLALRY. Residues 237–257 form a helical membrane-spanning segment; the sequence is YLTTYSNLCWTFGQLFAAGIM. The Extracellular portion of the chain corresponds to 258 to 272; that stretch reads KNSQNKYANSELGYK. Residues 273–293 traverse the membrane as a helical segment; that stretch reads LPFALQWIWPLPLAVGIFLAP. Over 294–364 the chain is Cytoplasmic; it reads ESPWWLVKKG…KDGINRRRTR (71 aa). The helical transmembrane segment at 365–385 threads the bilayer; the sequence is IACLCWIGQCSCGASLIGYST. The Extracellular portion of the chain corresponds to 386–398; that stretch reads YFYEKAGVSTDTA. Residues 399-419 form a helical membrane-spanning segment; the sequence is FTFSIIQYCLGIAATFVSWWA. The Cytoplasmic portion of the chain corresponds to 420–427; sequence SKYCGRFD. A helical membrane pass occupies residues 428–448; the sequence is LYAFGLAFQAIMFFIIGGLGC. Over 449 to 460 the chain is Extracellular; the sequence is SDTHGAKMGSGA. The chain crosses the membrane as a helical span at residues 461 to 481; sequence LLMVVAFFYNLGIAPVVFCLV. Residues 482–493 are Cytoplasmic-facing; sequence SEMPSSRLRTKT. The helical transmembrane segment at 494 to 514 threads the bilayer; the sequence is IILARNAYNVIQVVVTVLIMY. Over 515 to 526 the chain is Extracellular; the sequence is QLNSEKWNWGAK. Residues 527-547 form a helical membrane-spanning segment; it reads SGFFWGGFCLATLAWAVVDLP. The Cytoplasmic segment spans residues 548-614; that stretch reads ETAGRTFIEI…GRSTPSVVNK (67 aa). Positions 594–614 are disordered; the sequence is KEDLETSVVDEGRSTPSVVNK.

Belongs to the major facilitator superfamily. Sugar transporter (TC 2.A.1.1) family.

The protein resides in the membrane. Transporter for maltose. The protein is Maltose permease MAL61 (MAL61) of Saccharomyces cerevisiae (Baker's yeast).